The following is a 240-amino-acid chain: Tetrahydromethanopterin S-methyltransferase subunit A (240 aa).

The Cytoplasmic segment spans residues 1-218 (MAEKREPAAG…KFHAGVHAGK (218 aa)). His85 contributes to the 5-hydroxybenzimidazolylcob(I)amide binding site. A helical transmembrane segment spans residues 219-239 (FEGIMIGLAITLSLLGLILFG). Arg240 is a topological domain (extracellular).

This sequence belongs to the MtrA family. In terms of assembly, the complex is composed of 8 subunits; MtrA, MtrB, MtrC, MtrD, MtrE, MtrF, MtrG and MtrH. 5-hydroxybenzimidazolylcob(I)amide is required as a cofactor.

The protein resides in the cell membrane. It carries out the reaction 5-methyl-5,6,7,8-tetrahydromethanopterin + coenzyme M + 2 Na(+)(in) = 5,6,7,8-tetrahydromethanopterin + methyl-coenzyme M + 2 Na(+)(out). It participates in one-carbon metabolism; methanogenesis from CO(2); methyl-coenzyme M from 5,10-methylene-5,6,7,8-tetrahydromethanopterin: step 2/2. Functionally, part of a complex that catalyzes the formation of methyl-coenzyme M and tetrahydromethanopterin from coenzyme M and methyl-tetrahydromethanopterin. This is an energy-conserving, sodium-ion translocating step. In Methanohalophilus mahii (strain ATCC 35705 / DSM 5219 / SLP), this protein is Tetrahydromethanopterin S-methyltransferase subunit A.